Here is a 100-residue protein sequence, read N- to C-terminus: MVSLHSYLIVSAILFSIGTIGVLVRRNAIVIFMCVEMMLNAVNLTFIALSRHLGNIDGQIFVFFVMTVAAAEAAVGLALMIAFYKNRESIDVEDVKLMKL.

3 consecutive transmembrane segments (helical) span residues 4–24, 29–49, and 60–80; these read LHSYLIVSAILFSIGTIGVLV, IVIFMCVEMMLNAVNLTFIAL, and IFVFFVMTVAAAEAAVGLALM.

It belongs to the complex I subunit 4L family. NDH-1 is composed of 14 different subunits. Subunits NuoA, H, J, K, L, M, N constitute the membrane sector of the complex.

Its subcellular location is the cell inner membrane. The enzyme catalyses a quinone + NADH + 5 H(+)(in) = a quinol + NAD(+) + 4 H(+)(out). In terms of biological role, NDH-1 shuttles electrons from NADH, via FMN and iron-sulfur (Fe-S) centers, to quinones in the respiratory chain. The immediate electron acceptor for the enzyme in this species is believed to be ubiquinone. Couples the redox reaction to proton translocation (for every two electrons transferred, four hydrogen ions are translocated across the cytoplasmic membrane), and thus conserves the redox energy in a proton gradient. This chain is NADH-quinone oxidoreductase subunit K 1, found in Geobacter sulfurreducens (strain ATCC 51573 / DSM 12127 / PCA).